A 353-amino-acid polypeptide reads, in one-letter code: Mitochondrial import inner membrane translocase subunit TIM50 (353 aa).

The transit peptide at 1–21 directs the protein to the mitochondrion; sequence MAASAALFSRLRSGLRVGARG. Topologically, residues 22 to 65 are mitochondrial matrix; sequence LCTRLAPPPPRTPEQVTEIANRGGSKAQGPQHQPGSEGPSYAKK. Residues 24–59 are disordered; that stretch reads TRLAPPPPRTPEQVTEIANRGGSKAQGPQHQPGSEG. Residues 66-86 traverse the membrane as a helical segment; the sequence is IALWIAGLLGAGGTVSIVYIF. At 87 to 353 the chain is on the mitochondrial intermembrane side; that stretch reads GNNPVDENGT…SRLWPRSKQP (267 aa). The region spanning 143–286 is the FCP1 homology domain; that stretch reads YYQPPYTLVL…LDLSAFLKTI (144 aa). The residue at position 341 (S341) is a Phosphoserine.

Belongs to the TIM50 family. As to quaternary structure, component of the TIM23 complex at least composed of TIMM23, TIMM17 (TIMM17A or TIMM17B) and TIMM50; within this complex, directly interacts with TIMM23. The complex interacts with the TIMM44 component of the PAM complex and with DNAJC15.

It localises to the mitochondrion inner membrane. Its function is as follows. Essential component of the TIM23 complex, a complex that mediates the translocation of transit peptide-containing proteins across the mitochondrial inner membrane. Has some phosphatase activity in vitro; however such activity may not be relevant in vivo. This is Mitochondrial import inner membrane translocase subunit TIM50 (Timm50) from Mus musculus (Mouse).